Reading from the N-terminus, the 447-residue chain is Zinc finger protein ZIC 1 (447 aa).

A C2H2-type 1; atypical zinc finger spans residues 225–260; it reads LICKWIEPEQLANPKKSCNKTFSTMHELVTHVTVEH. The C2H2-type 2; atypical zinc-finger motif lies at 269 to 296; it reads HICFWEECPREGKPFKAKYKLVNHIRVH. C2H2-type zinc fingers lie at residues 302–326, 332–356, and 362–384; these read FPCPFPGCGKVFARSENLKIHKRTH, FKCEFEGCDRRFANSSDRKKHMHVH, and YLCKMCDKSYTHPSSLRKHMKVH. A disordered region spans residues 375 to 431; that stretch reads SSLRKHMKVHESSSQGSQPSPAASSGYESSTPPTIVSPSTDNPTTSSLSPSSSAVHH. Over residues 386–427 the composition is skewed to low complexity; the sequence is SSSQGSQPSPAASSGYESSTPPTIVSPSTDNPTTSSLSPSSS.

Belongs to the GLI C2H2-type zinc-finger protein family. Interacts (via the C2H2-type domains 3, 4 and 5) with MDFIC (via the C2H2-type domains 3, 4 and 5). Interacts with GLI1; the interaction enhances transcription activation. Interacts with GLI2. Interacts with GLI3; the interaction enhances transcription activation. In terms of tissue distribution, CNS. A high level expression is seen in the cerebellum. Detected in the nuclei of the cerebellar granule cell lineage from the progenitor cells of the external germinal layer to the postmigrated cells of the internal granular layer. Detected in medulloblastoma (26/29 cases), but not present in all other tumors examined.

The protein localises to the nucleus. Its subcellular location is the cytoplasm. Functionally, acts as a transcriptional activator. Involved in neurogenesis. Plays important roles in the early stage of organogenesis of the CNS, as well as during dorsal spinal cord development and maturation of the cerebellum. Involved in the spatial distribution of mossy fiber (MF) neurons within the pontine gray nucleus (PGN). Plays a role in the regulation of MF axon pathway choice. Promotes MF migration towards ipsilaterally-located cerebellar territories. May have a role in shear flow mechanotransduction in osteocytes. Retains nuclear GLI1 and GLI3 in the cytoplasm. Binds to the minimal GLI-consensus sequence 5'-TGGGTGGTC-3'. The chain is Zinc finger protein ZIC 1 (ZIC1) from Homo sapiens (Human).